Reading from the N-terminus, the 282-residue chain is Protein MGF 505-3R (282 aa).

It belongs to the asfivirus MGF 505 family.

Functionally, plays a role in virus cell tropism, and may be required for efficient virus replication in macrophages. The polypeptide is Protein MGF 505-3R (Ornithodoros (relapsing fever ticks)).